The chain runs to 448 residues: Metacaspase-1 (448 aa).

Residues 1–129 (MFPGQGRHTY…GHYSRPPTDS (129 aa)) are disordered. Residues 10–44 (YGGQQSNYSNQQQGYDQGYNQGYGQAYGQEYNQGY) are compositionally biased toward low complexity. Over residues 61-70 (SGPPPGPPPG) the composition is skewed to pro residues. A compositionally biased stretch (polar residues) spans 99–114 (YGNNQTRGSGNEQNYG). Residues H231 and C292 contribute to the active site.

Belongs to the peptidase C14B family.

Involved in cell death (apoptosis). The protein is Metacaspase-1 (MCA1) of Candida albicans (strain SC5314 / ATCC MYA-2876) (Yeast).